We begin with the raw amino-acid sequence, 116 residues long: Transmembrane protein 213 (116 aa).

Positions 1-35 (MAQSGVFLRNPGHLTSAPQAALLFSLVLTSFHLSC) are cleaved as a signal peptide. At 36 to 79 (GTETSSSNSTLSAHHPDPGTLEQCANVDFCPLASLCCRASVDEY) the chain is on the extracellular side. Residues 80–100 (GWIAAAVGWSFWFLTLILLCV) form a helical membrane-spanning segment. The Cytoplasmic segment spans residues 101–116 (DKLMKLTPEEPKDLAA).

The protein resides in the membrane. The polypeptide is Transmembrane protein 213 (Tmem213) (Mus musculus (Mouse)).